A 91-amino-acid chain; its full sequence is MARSVWKGPFVDLHLLKKAETAQEGGSTAPIKTWSRRSTILPQFVGLTFNVYNGRKFVPVSVNEDMVGMKLGEFAPTRFFPGHAADKKGKR.

Belongs to the universal ribosomal protein uS19 family.

Protein S19 forms a complex with S13 that binds strongly to the 16S ribosomal RNA. The chain is Small ribosomal subunit protein uS19 from Sphingopyxis alaskensis (strain DSM 13593 / LMG 18877 / RB2256) (Sphingomonas alaskensis).